The sequence spans 392 residues: ATP phosphoribosyltransferase regulatory subunit (392 aa).

Belongs to the class-II aminoacyl-tRNA synthetase family. HisZ subfamily. As to quaternary structure, heteromultimer composed of HisG and HisZ subunits.

It localises to the cytoplasm. Its pathway is amino-acid biosynthesis; L-histidine biosynthesis; L-histidine from 5-phospho-alpha-D-ribose 1-diphosphate: step 1/9. In terms of biological role, required for the first step of histidine biosynthesis. May allow the feedback regulation of ATP phosphoribosyltransferase activity by histidine. This Prochlorococcus marinus (strain MIT 9313) protein is ATP phosphoribosyltransferase regulatory subunit.